The primary structure comprises 337 residues: AP2/ERF and B3 domain-containing transcription factor At1g50680 (337 aa).

Residues 27–84 constitute a DNA-binding region (AP2/ERF); the sequence is KYKGVVQQQNGHWGAQIYADHKRIWLGTFKSADEAATAYDSASIKLRSFDANSHRNFP. The TF-B3 DNA-binding region spans 157 to 271; it reads FQKELTPSDV…VKTLEGQRKN (115 aa).

This sequence belongs to the AP2/ERF transcription factor family. RAV subfamily.

The protein localises to the nucleus. Its function is as follows. Probably acts as a transcriptional activator. Binds to the GCC-box pathogenesis-related promoter element. May be involved in the regulation of gene expression by stress factors and by components of stress signal transduction pathways. This Arabidopsis thaliana (Mouse-ear cress) protein is AP2/ERF and B3 domain-containing transcription factor At1g50680.